The chain runs to 362 residues: NAD(P)H-quinone oxidoreductase subunit 1, chloroplastic (362 aa).

Transmembrane regions (helical) follow at residues 27–47, 94–114, 128–148, 164–184, 202–222, 247–267, 303–323, and 335–355; these read IWIL…LVIV, IPLF…SFLV, IGVF…LMAG, AAQS…ISLL, FFGW…ISSL, YSGI…LVSS, TMSI…SITI, and LLNL…LLTT.

This sequence belongs to the complex I subunit 1 family. NDH is composed of at least 16 different subunits, 5 of which are encoded in the nucleus.

It is found in the plastid. Its subcellular location is the chloroplast thylakoid membrane. It catalyses the reaction a plastoquinone + NADH + (n+1) H(+)(in) = a plastoquinol + NAD(+) + n H(+)(out). The catalysed reaction is a plastoquinone + NADPH + (n+1) H(+)(in) = a plastoquinol + NADP(+) + n H(+)(out). NDH shuttles electrons from NAD(P)H:plastoquinone, via FMN and iron-sulfur (Fe-S) centers, to quinones in the photosynthetic chain and possibly in a chloroplast respiratory chain. The immediate electron acceptor for the enzyme in this species is believed to be plastoquinone. Couples the redox reaction to proton translocation, and thus conserves the redox energy in a proton gradient. The sequence is that of NAD(P)H-quinone oxidoreductase subunit 1, chloroplastic (ndhA) from Oryza sativa (Rice).